A 308-amino-acid polypeptide reads, in one-letter code: Zinc finger protein unc-98 (308 aa).

2 C2H2-type zinc fingers span residues Y111 to H133 and Y139 to H161. The C2H2-type 3; degenerate zinc finger occupies G166 to H186. The C2H2-type 4 zinc finger occupies Y244 to H266.

The protein resides in the nucleus. The protein localises to the cytoplasm. Probable transcription factor. Required for muscle structure. Its dual subcellular localization suggests that it may function both as a muscle adhesion complex protein and as a transcription factor, or work together with transcription factors, to influence gene expression. Thought to act as a molecular bridge between unc-97 and mhc-a at the M-line of muscles, possibly in a signaling role. The chain is Zinc finger protein unc-98 from Caenorhabditis briggsae.